A 561-amino-acid polypeptide reads, in one-letter code: Lanosterol 14-alpha demethylase (561 aa).

Residue C501 participates in heme binding.

Belongs to the cytochrome P450 family. The cofactor is heme.

The protein localises to the membrane. The catalysed reaction is a 14alpha-methyl steroid + 3 reduced [NADPH--hemoprotein reductase] + 3 O2 = a Delta(14) steroid + formate + 3 oxidized [NADPH--hemoprotein reductase] + 4 H2O + 4 H(+). It catalyses the reaction a 14alpha-methyl steroid + reduced [NADPH--hemoprotein reductase] + O2 = a 14alpha-hydroxymethyl steroid + oxidized [NADPH--hemoprotein reductase] + H2O + H(+). It carries out the reaction a 14alpha-hydroxymethyl steroid + reduced [NADPH--hemoprotein reductase] + O2 = a 14alpha-formyl steroid + oxidized [NADPH--hemoprotein reductase] + 2 H2O + H(+). The enzyme catalyses a 14alpha-formyl steroid + reduced [NADPH--hemoprotein reductase] + O2 = a Delta(14) steroid + formate + oxidized [NADPH--hemoprotein reductase] + H2O + 2 H(+). The catalysed reaction is lanosterol + 3 reduced [NADPH--hemoprotein reductase] + 3 O2 = 4,4-dimethyl-5alpha-cholesta-8,14,24-trien-3beta-ol + formate + 3 oxidized [NADPH--hemoprotein reductase] + 4 H2O + 4 H(+). It catalyses the reaction lanosterol + reduced [NADPH--hemoprotein reductase] + O2 = 32-hydroxylanosterol + oxidized [NADPH--hemoprotein reductase] + H2O + H(+). It carries out the reaction 32-hydroxylanosterol + reduced [NADPH--hemoprotein reductase] + O2 = 32-oxolanosterol + oxidized [NADPH--hemoprotein reductase] + 2 H2O + H(+). The enzyme catalyses 32-oxolanosterol + reduced [NADPH--hemoprotein reductase] + O2 = 4,4-dimethyl-5alpha-cholesta-8,14,24-trien-3beta-ol + formate + oxidized [NADPH--hemoprotein reductase] + H2O + 2 H(+). The catalysed reaction is eburicol + 3 reduced [NADPH--hemoprotein reductase] + 3 O2 = 14-demethyleburicol + formate + 3 oxidized [NADPH--hemoprotein reductase] + 4 H2O + 4 H(+). It catalyses the reaction eburicol + reduced [NADPH--hemoprotein reductase] + O2 = 32-hydroxyeburicol + oxidized [NADPH--hemoprotein reductase] + H2O + H(+). It carries out the reaction 32-hydroxyeburicol + reduced [NADPH--hemoprotein reductase] + O2 = 32-oxoeburicol + oxidized [NADPH--hemoprotein reductase] + 2 H2O + H(+). The enzyme catalyses 32-oxoeburicol + reduced [NADPH--hemoprotein reductase] + O2 = 14-demethyleburicol + formate + oxidized [NADPH--hemoprotein reductase] + H2O + 2 H(+). Its pathway is steroid biosynthesis; zymosterol biosynthesis; zymosterol from lanosterol: step 1/6. Sterol 14alpha-demethylase that plays a critical role in the third module of ergosterol biosynthesis pathway, being ergosterol the major sterol component in fungal membranes that participates in a variety of functions. The third module or late pathway involves the ergosterol synthesis itself through consecutive reactions that mainly occur in the endoplasmic reticulum (ER) membrane. In filamentous fungi, during the initial step of this module, lanosterol (lanosta-8,24-dien-3beta-ol) can be metabolized to eburicol. Sterol 14alpha-demethylase catalyzes the three-step oxidative removal of the 14alpha-methyl group (C-32) of both these sterols in the form of formate, and converts eburicol and lanosterol to 14-demethyleburicol (4,4,24-trimethylergosta-8,14,24(28)-trienol) and 4,4-dimethyl-5alpha-cholesta-8,14,24-trien-3beta-ol, respectively, which are further metabolized by other enzymes in the pathway to ergosterol. Can also use substrates not intrinsic to fungi, such as 24,25-dihydrolanosterol (DHL), producing 4,4-dimethyl-8,14-cholestadien-3-beta-ol, but at lower rates than the endogenous substrates. This is Lanosterol 14-alpha demethylase (ERG11) from Mycosarcoma maydis (Corn smut fungus).